The primary structure comprises 145 residues: MSTQIDLVRRMVEAYNTGKTDDVAEFIHLEYLNPGALEHNPELRGPEAFAAAVTWLKYAFSEEAHLEEIEYEENGPWVRAKLALYGRHVGNLVGMPATGRRFSGEQIHLIRIVDGKIRDHRDWPDYLGTYRQLGEPWPTPEGWRP.

Position 106 (glutamine 106) interacts with substrate.

It belongs to the polyketide cyclase DnrD family. Homotetramer.

It catalyses the reaction methyl aklanonate = aklaviketone. Its pathway is antibiotic biosynthesis; daunorubicin biosynthesis. It functions in the pathway antibiotic biosynthesis; carminomycin biosynthesis. The protein operates within antibiotic biosynthesis; rhodomycin biosynthesis. It participates in antibiotic biosynthesis; aclacinomycin biosynthesis. Functionally, involved in the biosynthesis of aklavinone which is an important precursor common to the formation of the clinically significant anthracyclines such as carminomycin, daunorubicin (daunomycin), rhodomycin, aclacinomycin T (aklavin) and aclacinomycin A (aclarubicin). These compounds are aromatic polyketide antibiotics that exhibit high cytotoxicity and are widely applied in the chemotherapy of a variety of cancers. Catalyzes the cyclization of aklanonic acid methyl ester to yield aklaviketone presumably via an intramolecular aldol condensation mechanism, although water is not eliminated. The polypeptide is Aklanonic acid methyl ester cyclase DnrD (dnrD) (Streptomyces peucetius).